Consider the following 499-residue polypeptide: Endoglucanase 3 (499 aa).

An N-terminal signal peptide occupies residues 1 to 19; it reads MALLRCLFLLAVLLPHRNA. Asp88 functions as the Nucleophile in the catalytic mechanism. Active-site residues include His416, Asp467, and Glu476.

This sequence belongs to the glycosyl hydrolase 9 (cellulase E) family. In terms of tissue distribution, expressed in flowers.

The protein resides in the secreted. The enzyme catalyses Endohydrolysis of (1-&gt;4)-beta-D-glucosidic linkages in cellulose, lichenin and cereal beta-D-glucans.. This Oryza sativa subsp. japonica (Rice) protein is Endoglucanase 3 (GLU8).